The primary structure comprises 63 residues: Cecropin-1 (63 aa).

Positions 1-21 (MNFNKVFILVAIVIAIFAGQT) are cleaved as a signal peptide. The propeptide occupies 22–23 (EA). Arginine 62 carries the arginine amide modification.

Belongs to the cecropin family.

It localises to the secreted. In terms of biological role, cecropins have lytic and antibacterial activity against several Gram-positive and Gram-negative bacteria. In Ceratitis capitata (Mediterranean fruit fly), this protein is Cecropin-1 (CEC1).